Consider the following 233-residue polypeptide: Germin-like protein (233 aa).

Residues 1–22 (MEAYKMFAFVVLLATTLYQAYA) form the signal peptide. A disulfide bridge connects residues Cys-32 and Cys-49. A Cupin type-1 domain is found at 63 to 215 (RGLNMPANTD…RPSISMRIWS (153 aa)). Mn(2+) is bound by residues His-111, His-113, Glu-118, and His-162.

Belongs to the germin family. Oligomer (believed to be a pentamer but probably hexamer). In terms of tissue distribution, expressed at high levels in unstressed roots.

It localises to the secreted. The protein resides in the extracellular space. Its subcellular location is the apoplast. Its function is as follows. May be involved in seed germination. The protein is Germin-like protein of Mesembryanthemum crystallinum (Common ice plant).